The following is a 689-amino-acid chain: Glycine--tRNA ligase beta subunit (689 aa).

This sequence belongs to the class-II aminoacyl-tRNA synthetase family. Tetramer of two alpha and two beta subunits.

The protein localises to the cytoplasm. The catalysed reaction is tRNA(Gly) + glycine + ATP = glycyl-tRNA(Gly) + AMP + diphosphate. The polypeptide is Glycine--tRNA ligase beta subunit (Photobacterium profundum (strain SS9)).